The sequence spans 122 residues: Small ribosomal subunit protein uS13 (122 aa).

Positions 99–122 (RGQRTHTNARTRKGPAKAIAGKKK) are disordered.

This sequence belongs to the universal ribosomal protein uS13 family. As to quaternary structure, part of the 30S ribosomal subunit. Forms a loose heterodimer with protein S19. Forms two bridges to the 50S subunit in the 70S ribosome.

Located at the top of the head of the 30S subunit, it contacts several helices of the 16S rRNA. In the 70S ribosome it contacts the 23S rRNA (bridge B1a) and protein L5 of the 50S subunit (bridge B1b), connecting the 2 subunits; these bridges are implicated in subunit movement. Contacts the tRNAs in the A and P-sites. This Sinorhizobium medicae (strain WSM419) (Ensifer medicae) protein is Small ribosomal subunit protein uS13.